The sequence spans 342 residues: L-threonine 3-dehydrogenase (342 aa).

A Zn(2+)-binding site is contributed by C38. Residues T40 and H43 each act as charge relay system in the active site. Zn(2+) contacts are provided by H63, E64, C93, C96, C99, and C107. NAD(+)-binding positions include I175, D195, R200, 262 to 264 (LGI), and 286 to 287 (IY).

Belongs to the zinc-containing alcohol dehydrogenase family. Homotetramer. Requires Zn(2+) as cofactor.

The protein localises to the cytoplasm. It carries out the reaction L-threonine + NAD(+) = (2S)-2-amino-3-oxobutanoate + NADH + H(+). It functions in the pathway amino-acid degradation; L-threonine degradation via oxydo-reductase pathway; glycine from L-threonine: step 1/2. Catalyzes the NAD(+)-dependent oxidation of L-threonine to 2-amino-3-ketobutyrate. The polypeptide is L-threonine 3-dehydrogenase (Burkholderia multivorans (strain ATCC 17616 / 249)).